A 540-amino-acid polypeptide reads, in one-letter code: Chaperonin GroEL 3 (540 aa).

ATP-binding positions include 30 to 33, lysine 51, 87 to 91, glycine 415, 479 to 481, and aspartate 495; these read TLGP, DGTTT, and NAA.

Belongs to the chaperonin (HSP60) family. In terms of assembly, forms a cylinder of 14 subunits composed of two heptameric rings stacked back-to-back. Interacts with the co-chaperonin GroES.

Its subcellular location is the cytoplasm. The catalysed reaction is ATP + H2O + a folded polypeptide = ADP + phosphate + an unfolded polypeptide.. Together with its co-chaperonin GroES, plays an essential role in assisting protein folding. The GroEL-GroES system forms a nano-cage that allows encapsulation of the non-native substrate proteins and provides a physical environment optimized to promote and accelerate protein folding. In Burkholderia ambifaria (strain ATCC BAA-244 / DSM 16087 / CCUG 44356 / LMG 19182 / AMMD) (Burkholderia cepacia (strain AMMD)), this protein is Chaperonin GroEL 3.